A 230-amino-acid chain; its full sequence is Protein RESPONSE TO ABA AND SALT 1 (230 aa).

Residues 7-230 (SQSFTIFVDG…RLRDRDQERA (224 aa)) enclose the DOG1 domain.

In terms of biological role, negative regulator of salt (NaCl) tolerance probably by enhancing abscisic acid (ABA) sensitivity. In Arabidopsis thaliana (Mouse-ear cress), this protein is Protein RESPONSE TO ABA AND SALT 1.